The chain runs to 124 residues: Ribonuclease pancreatic (124 aa).

Residues 1-13 show a composition bias toward basic and acidic residues; it reads KESAAAKFERQHM. The disordered stretch occupies residues 1–24; it reads KESAAAKFERQHMDPSMSSASSSN. Residues K7 and R10 each contribute to the substrate site. H12 serves as the catalytic Proton acceptor. Disulfide bonds link C26–C84, C40–C95, C58–C110, and C65–C72. Residues 41-45, K66, and R85 contribute to the substrate site; that span reads KPVNT. H119 serves as the catalytic Proton donor.

The protein belongs to the pancreatic ribonuclease family. In terms of assembly, monomer. Interacts with and forms tight 1:1 complexes with RNH1. Dimerization of two such complexes may occur. Interaction with RNH1 inhibits this protein. Pancreas.

The protein resides in the secreted. The enzyme catalyses an [RNA] containing cytidine + H2O = an [RNA]-3'-cytidine-3'-phosphate + a 5'-hydroxy-ribonucleotide-3'-[RNA].. It carries out the reaction an [RNA] containing uridine + H2O = an [RNA]-3'-uridine-3'-phosphate + a 5'-hydroxy-ribonucleotide-3'-[RNA].. Endonuclease that catalyzes the cleavage of RNA on the 3' side of pyrimidine nucleotides. Acts on single-stranded and double-stranded RNA. The sequence is that of Ribonuclease pancreatic (RNASE1) from Dama dama (Fallow deer).